Consider the following 227-residue polypeptide: Claudin-15 (227 aa).

Met1 is a topological domain (cytoplasmic). Residues 2 to 24 (SIAVETFGFFMSALGLLMLGVTL) traverse the membrane as a helical segment. The Extracellular portion of the chain corresponds to 25–74 (PNSYWRVSTVHGNVITTNTIFENLWYSCATDSLGVSNCWDFPSMLALSGY). A disulfide bridge links Cys52 with Cys62. The helical transmembrane segment at 75–99 (VQGCRALMITAILLGFLGLFLGMVG) threads the bilayer. The Cytoplasmic portion of the chain corresponds to 100-115 (LRCTNVGNIDLSRKAK). The residue at position 111 (Ser111) is a Phosphoserine. A helical transmembrane segment spans residues 116–140 (LLAIAGAFHILAGACGMVAISWYAV). Residues 141-159 (NITTDFFNPLYVGTKYELG) lie on the Extracellular side of the membrane. An important for the formation of tight-junction strand-like structures region spans residues 146 to 147 (FF). Residues 160–182 (SALYLGWSASLLSILGGICVFST) traverse the membrane as a helical segment. Residues 183–227 (CCCDSKEDPATRVGLPYKPSTVVTARATSDESDVSFGKYGKNAYV) are Cytoplasmic-facing. A phosphoserine mark is found at Ser211, Ser214, and Ser217.

It belongs to the claudin family. As to quaternary structure, can form homo- and heteropolymeric tight junction strands. Post-translationally, palmitoylated. In terms of tissue distribution, detected in kidney, jejunum and colon (at protein level).

The protein resides in the cell junction. It is found in the tight junction. It localises to the cell membrane. The enzyme catalyses Na(+)(in) = Na(+)(out). It carries out the reaction K(+)(in) = K(+)(out). The catalysed reaction is Cs(+)(in) = Cs(+)(out). It catalyses the reaction Rb(+)(in) = Rb(+)(out). The enzyme catalyses Li(+)(in) = Li(+)(out). It carries out the reaction NH4(+)(in) = NH4(+)(out). The catalysed reaction is methylamine(out) = methylamine(in). It catalyses the reaction H2O(in) = H2O(out). In terms of biological role, forms paracellular channels: polymerizes in tight junction strands with cation- and water-selective channels through the strands, conveying epithelial permeability in a process known as paracellular tight junction permeability. In intestinal epithelium, allows for sodium and water fluxes from the peritoneal side to the lumen of the intestine to regulate nutrient absorption and intestinal morphogenesis. This is Claudin-15 from Rattus norvegicus (Rat).